We begin with the raw amino-acid sequence, 258 residues long: Short-chain dehydrogenase/reductase aba4 (258 aa).

NADP(+) contacts are provided by isoleucine 20, aspartate 66, and lysine 130. Catalysis depends on proton donor residues serine 146 and tyrosine 160. Residues tyrosine 160, lysine 164, isoleucine 193, and threonine 195 each coordinate NADP(+). Lysine 164 serves as the catalytic Lowers pKa of active site Tyr.

The protein belongs to the short-chain dehydrogenases/reductases (SDR) family.

It participates in hormone biosynthesis. Short-chain dehydrogenase/reductase; part of the gene cluster that mediates the biosynthesis of abscisic acid (ABA), a phytohormone that acts antagonistically toward salicylic acid (SA), jasmonic acid (JA) and ethylene (ETH) signaling, to impede plant defense responses. The first step of the pathway catalyzes the reaction from farnesyl diphosphate to alpha-ionylideneethane performed by the alpha-ionylideneethane synthase aba3 via a three-step reaction mechanism involving 2 neutral intermediates, beta-farnesene and allofarnesene. The cytochrome P450 monooxygenase aba1 might then be involved in the conversion of alpha-ionylideneethane to alpha-ionylideneacetic acid. Alpha-ionylideneacetic acid is further converted to abscisic acid in 2 steps involving the cytochrome P450 monooxygenase aba2 and the short-chain dehydrogenase/reductase aba4, via the intermediates 1'-deoxy-ABA or 1',4'-trans-diol-ABA, depending on the order of action of these 2 enzymes. Aba2 is responsible for the hydroxylation of carbon atom C-1' and aba4 might be involved in the oxidation of the C-4' carbon atom. This chain is Short-chain dehydrogenase/reductase aba4, found in Botryotinia fuckeliana (Noble rot fungus).